A 409-amino-acid chain; its full sequence is uncharacterized protein (409 aa).

A signal peptide spans 1-26 (MKKELLASLVLCLSLSPLVSTNEVFA).

This is an uncharacterized protein from Bacillus subtilis (strain 168).